We begin with the raw amino-acid sequence, 906 residues long: NACHT, LRR and PYD domains-containing protein 1b allele 4 (906 aa).

The segment at 1–22 (MEESPPKQKSNTKVAQHEGQQD) is disordered. The NACHT domain maps to 126–435 (QLVIIEGAAG…EFFAAISCIL (310 aa)). Position 132–139 (132–139 (GAAGIGKS)) interacts with ATP. LRR repeat units lie at residues 627-647 (NLEG…QSLC) and 684-704 (SLTE…RMLC). Positions 789-906 (FWGPTGPVAT…FQEHGSRNAR (118 aa)) constitute an FIIND (incomplete) domain.

It belongs to the NLRP family. Expressed in macrophages.

Its subcellular location is the cytoplasm. It is found in the cytosol. Functionally, probable inactive allele of Nlrp1b, which lacks a CARD domain, suggesting that it is not able to form an inflammasome. Contrary to Nlrp1b allele 1, allele 4 is not activated by B.anthracis lethal toxin and no other activation signal is reported. In Mus musculus (Mouse), this protein is NACHT, LRR and PYD domains-containing protein 1b allele 4.